A 142-amino-acid polypeptide reads, in one-letter code: Protein NIM1-INTERACTING 1 (142 aa).

The segment at 47–53 is involved in NPR1/NIM1 interaction; sequence DTFFKLI. The short motif at 60–64 is the Nuclear localization signal element; it reads RKRRR. 2 disordered regions span residues 63–86 and 108–142; these read RREE…RSGI and MFVS…NLAL. The stretch at 110 to 141 forms a coiled coil; that stretch reads VSDHKEENTKVEQEEDQTEERNEDKALDLNLA. The span at 111-121 shows a compositional bias: basic and acidic residues; that stretch reads SDHKEENTKVE.

The protein belongs to the NPR1-interactor family. Interacts with NPR1 C-terminal region.

It is found in the nucleus. The chain is Protein NIM1-INTERACTING 1 from Arabidopsis thaliana (Mouse-ear cress).